A 267-amino-acid polypeptide reads, in one-letter code: REH2-associated factor 2 (267 aa).

As to quaternary structure, component of the REH2-associated complex (REH2C) composed of helicase REH2, associated factors H2F1 and H2F2, and mRNAs at various editing stages; the formation of the complex is RNA-independent. Interacts with various editing complexes including the RNA editing core (RECC) complex, the gRNA-binding (GRBC) complex (also known as the MRB1 complex) and the RNA editing mediator (REMC) complex.

The protein resides in the mitochondrion. Its function is as follows. May play a role in mitochondrial mRNA editing by facilitating the association of the gRNA-binding (GRBC) complex with the RNA editing core (RECC) complex. However, appears to be dispensable for mRNA editing per se. The polypeptide is REH2-associated factor 2 (Trypanosoma brucei brucei (strain 927/4 GUTat10.1)).